Here is a 747-residue protein sequence, read N- to C-terminus: H(+)/Cl(-) exchange transporter 4 (747 aa).

The segment at 1 to 50 (MDFLDEPFPDVGTYEDFHTIDWLREKSRDTDRHRKITSKSKESIWEFIKS) is required for localization in the endoplasmic reticulum. The Cytoplasmic segment spans residues 1 to 54 (MDFLDEPFPDVGTYEDFHTIDWLREKSRDTDRHRKITSKSKESIWEFIKSLLDA). Helical transmembrane passes span 55–92 (WSGWVVMLLIGLLAGTLAGVIDLAVDWMTDLKEGVCLS) and 138–161 (LNYLMYILWALLFAFLAVSLVRVF). The Selectivity filter part_1 signature appears at 167–171 (GSGIP). Ser-168 is a chloride binding site. The segment at residues 170–177 (IPEIKTIL) is an intramembrane region (helical). Helical transmembrane passes span 187–205 (GKWTLLIKTVTLVLVVSSG) and 211–230 (EGPLVHVACCCGNFFSSLFS). Residues 209-213 (GKEGP) carry the Selectivity filter part_2 motif. 2 consecutive intramembrane regions (helical) follow at residues 242 to 254 (VLSAAAAAGVSVA) and 258 to 266 (PIGGVLFSL). Transmembrane regions (helical) follow at residues 278 to 296 (LWRSFFAALVAAFTLRSIN), 320 to 345 (FPFILLGVFGGLWGTVFTRCNIAWCR), 352 to 372 (LGKYPVLEVIVVTAITAIIAY), 429 to 449 (MWQLALALIFKIVITIFTFGM), and 454 to 473 (GLFIPSMAVGAMAGRMVGIG). Positions 454–458 (GLFIP) match the Selectivity filter part_3 motif. Residue Phe-456 coordinates chloride. 2 intramembrane regions (helical) span residues 501 to 515 (GLYAMVGAAACLGGV) and 519 to 530 (TVSLVVIMFELT). An intramembrane region (note=Loop between two helices) is located at residues 531–534 (GGLE). Residues 535 to 553 (YIVPLMAAAVTSKWVADAF) form a helical membrane-spanning segment. At 554-747 (GKEGIYEAHI…NQDPESIIFN (194 aa)) the chain is on the cytoplasmic side. Tyr-559 contributes to the chloride binding site. In terms of domain architecture, CBS 1 spans 587-653 (MRPRRGEPPL…AIKNARQRQE (67 aa)). Residues Ser-597 and 618–620 (YNG) contribute to the ATP site. The tract at residues 654–683 (GIVSNSIMYFTEEPPELPANSPHPLKLRRI) is required for localization in the endoplasmic reticulum. Residues 684–742 (LNLSPFTVTDHTPMETVVDIFRKLGLRQCLVTRSGRLLGIITKKDVLRHMAQMANQDPE) form the CBS 2 domain. Position 725–728 (725–728 (TKKD)) interacts with ATP.

It belongs to the chloride channel (TC 2.A.49) family. ClC-4/CLCN4 subfamily. As to expression, strongly expressed in liver and brain, but also in heart, muscle, kidney and spleen.

It localises to the early endosome membrane. Its subcellular location is the late endosome membrane. The protein resides in the endoplasmic reticulum membrane. The protein localises to the lysosome membrane. It is found in the recycling endosome membrane. In terms of biological role, strongly outwardly rectifying, electrogenic H(+)/Cl(-)exchanger which mediates the exchange of chloride ions against protons. The CLC channel family contains both chloride channels and proton-coupled anion transporters that exchange chloride or another anion for protons. The presence of conserved gating glutamate residues is typical for family members that function as antiporters. The protein is H(+)/Cl(-) exchange transporter 4 (Clcn4) of Rattus norvegicus (Rat).